Consider the following 491-residue polypeptide: Probable glycine dehydrogenase (decarboxylating) subunit 2 (491 aa).

The residue at position 273 (Lys-273) is an N6-(pyridoxal phosphate)lysine.

It belongs to the GcvP family. C-terminal subunit subfamily. In terms of assembly, the glycine cleavage system is composed of four proteins: P, T, L and H. In this organism, the P 'protein' is a heterodimer of two subunits. It depends on pyridoxal 5'-phosphate as a cofactor.

The catalysed reaction is N(6)-[(R)-lipoyl]-L-lysyl-[glycine-cleavage complex H protein] + glycine + H(+) = N(6)-[(R)-S(8)-aminomethyldihydrolipoyl]-L-lysyl-[glycine-cleavage complex H protein] + CO2. Functionally, the glycine cleavage system catalyzes the degradation of glycine. The P protein binds the alpha-amino group of glycine through its pyridoxal phosphate cofactor; CO(2) is released and the remaining methylamine moiety is then transferred to the lipoamide cofactor of the H protein. The polypeptide is Probable glycine dehydrogenase (decarboxylating) subunit 2 (Bacillus anthracis (strain A0248)).